A 473-amino-acid chain; its full sequence is Putative amidase AmiC (473 aa).

Catalysis depends on charge relay system residues Lys82 and Ser157. The Acyl-ester intermediate role is filled by Ser181.

It belongs to the amidase family.

The catalysed reaction is a monocarboxylic acid amide + H2O = a monocarboxylate + NH4(+). The sequence is that of Putative amidase AmiC (amiC) from Mycobacterium bovis (strain ATCC BAA-935 / AF2122/97).